Here is a 157-residue protein sequence, read N- to C-terminus: Endoribonuclease YbeY (157 aa).

Zn(2+) is bound by residues His-111, His-115, and His-121.

Belongs to the endoribonuclease YbeY family. It depends on Zn(2+) as a cofactor.

Its subcellular location is the cytoplasm. Functionally, single strand-specific metallo-endoribonuclease involved in late-stage 70S ribosome quality control and in maturation of the 3' terminus of the 16S rRNA. The polypeptide is Endoribonuclease YbeY (Pseudomonas entomophila (strain L48)).